We begin with the raw amino-acid sequence, 330 residues long: PDZ and LIM domain protein 4 (330 aa).

One can recognise a PDZ domain in the interval 1-84 (MPHSVTLRGP…HLTLSVSRPE (84 aa)). Residues 104-180 (IDPEIQDGSP…DPARGLPRSR (77 aa)) form a disordered region. Over residues 111 to 121 (GSPTTSRRPSG) the composition is skewed to low complexity. A phosphoserine mark is found at serine 112, serine 116, serine 120, and serine 135. A compositionally biased stretch (polar residues) spans 148 to 163 (NGSSEATLPAQMSTLH). The LIM zinc-binding domain maps to 253 to 312 (PECTRCGHGIVGTIVKARDKLYHPECFMCSDCGLNLKQRGYFFLDERLYCESHAKARVKP).

As to quaternary structure, homodimer. Interacts with PTPN13. Interacts (via C-terminus only or via combined C-terminus and LIM domain, but not LIM domain only) with PTPN13 (via the second or fourth PDZ domains). Found in a complex with PTPN13 and TRIP6. Interacts (via PDZ domain) with ACTN1 and ACTN2 (via C-terminal SDL residues). Interacts (via PDZ domain) with TRIP6 (via the second LIM domain or via the third LIM domain plus C-terminus). Interacts (via LIM domain) with GRIA1 (via C-terminus); this interaction as well as the interaction with alpha-actinin is required for their colocalization in early endosomes. Interacts with PDLIM1. Forms (via LIM domain) a heterodimer with PDLIM3. Interacts directly with SRC (via kinase domain and to a lesser extent the SH2 domain). Isoform 2 interacts with NQO1. NQO1-stabilized isoform 2 heterodimerizes with isoform 1. In terms of processing, phosphorylated on tyrosine residue(s). Can be dephosphorylated by PTPN13. In terms of tissue distribution, found in brain.

It localises to the cytoplasm. It is found in the cytoskeleton. The protein localises to the nucleus. The protein resides in the perinuclear region. Its subcellular location is the cell projection. It localises to the lamellipodium. It is found in the dendritic spine. The protein localises to the early endosome membrane. The protein resides in the recycling endosome membrane. Its subcellular location is the synapse. It localises to the synaptosome. Suppresses SRC activation by recognizing and binding to active SRC and facilitating PTPN13-mediated dephosphorylation of SRC 'Tyr-419' leading to its inactivation. Inactivated SRC dissociates from this protein allowing the initiation of a new SRC inactivation cycle. Involved in reorganization of the actin cytoskeleton. In nonmuscle cells, binds to ACTN1 (alpha-actinin-1), increases the affinity of ACTN1 to F-actin (filamentous actin), and promotes formation of actin stress fibers. Involved in regulation of the synaptic AMPA receptor transport in dendritic spines of hippocampal pyramidal neurons directing the receptors toward an insertion at the postsynaptic membrane. Links endosomal surface-internalized GRIA1-containing AMPA receptors to the alpha-actinin/actin cytoskeleton. Increases AMPA receptor-mediated excitatory postsynaptic currents in neurons. In terms of biological role, involved in reorganization of the actin cytoskeleton and in regulation of cell migration. In response to oxidative stress, binds to NQO1, which stabilizes it and protects it from ubiquitin-independent degradation by the core 20S proteasome. Stabilized protein is able to heterodimerize with isoform 1 changing the subcellular location of it from cytoskeleton and nuclei to cytosol, leading to loss of isoforms 1 ability to induce formation of actin stress fibers. Counteracts the effects produced by isoform 1 on organization of actin cytoskeleton and cell motility to fine-tune actin cytoskeleton rearrangement and to attenuate cell migration. The sequence is that of PDZ and LIM domain protein 4 (PDLIM4) from Homo sapiens (Human).